The primary structure comprises 380 residues: tRNA-specific 2-thiouridylase MnmA (380 aa).

ATP is bound by residues 6-13 (ALSGGVDS) and Met-32. Cys-101 functions as the Nucleophile in the catalytic mechanism. Residues Cys-101 and Cys-199 are joined by a disulfide bond. Gly-125 is an ATP binding site. An interaction with tRNA region spans residues 148-150 (KDQ). The active-site Cysteine persulfide intermediate is Cys-199.

It belongs to the MnmA/TRMU family.

It is found in the cytoplasm. It catalyses the reaction S-sulfanyl-L-cysteinyl-[protein] + uridine(34) in tRNA + AH2 + ATP = 2-thiouridine(34) in tRNA + L-cysteinyl-[protein] + A + AMP + diphosphate + H(+). In terms of biological role, catalyzes the 2-thiolation of uridine at the wobble position (U34) of tRNA, leading to the formation of s(2)U34. This chain is tRNA-specific 2-thiouridylase MnmA, found in Beutenbergia cavernae (strain ATCC BAA-8 / DSM 12333 / CCUG 43141 / JCM 11478 / NBRC 16432 / NCIMB 13614 / HKI 0122).